We begin with the raw amino-acid sequence, 499 residues long: Probable UTP--glucose-1-phosphate uridylyltransferase (499 aa).

UTP-binding positions include 108–111 (LNGG), lysine 122, glutamine 185, and glycine 214. 110-111 (GG) lines the substrate pocket. Substrate-binding positions include histidine 215 and 243 to 245 (NID). UTP-binding residues include aspartate 245 and lysine 387.

It belongs to the UDPGP type 1 family.

The protein resides in the cytoplasm. It localises to the nucleus. It carries out the reaction alpha-D-glucose 1-phosphate + UTP + H(+) = UDP-alpha-D-glucose + diphosphate. Plays a central role as a glucosyl donor in cellular metabolic pathways. The chain is Probable UTP--glucose-1-phosphate uridylyltransferase from Schizosaccharomyces pombe (strain 972 / ATCC 24843) (Fission yeast).